The primary structure comprises 120 residues: ATP-dependent Clp protease adapter protein ClpS (120 aa).

Positions 1–25 are disordered; that stretch reads MHARSEIRLTFNQDRPQSNEDDGSG.

The protein belongs to the ClpS family. In terms of assembly, binds to the N-terminal domain of the chaperone ClpA.

In terms of biological role, involved in the modulation of the specificity of the ClpAP-mediated ATP-dependent protein degradation. The sequence is that of ATP-dependent Clp protease adapter protein ClpS from Pseudomonas putida (strain W619).